Consider the following 142-residue polypeptide: Secreted RxLR effector protein 161 (142 aa).

Residues 1–27 (MKNVPYLSAVGAIMYLMVVTRPDLAAA) form the signal peptide. The RxLR motif lies at 48-51 (RVLR).

The protein belongs to the RxLR effector family.

It localises to the secreted. The protein localises to the host chloroplast envelope. It is found in the host nucleus. Its function is as follows. Secreted effector that completely suppresses the host cell death induced by cell death-inducing proteins. The sequence is that of Secreted RxLR effector protein 161 from Plasmopara viticola (Downy mildew of grapevine).